Here is a 285-residue protein sequence, read N- to C-terminus: Shikimate dehydrogenase (NADP(+)) (285 aa).

Shikimate-binding positions include 22 to 24 (SRS) and Thr-71. Lys-75 acts as the Proton acceptor in catalysis. Shikimate is bound by residues Asn-96 and Asp-111. Residues 136 to 140 (GAGGA), 160 to 165 (NRTVGR), and Ile-225 contribute to the NADP(+) site. Tyr-227 is a shikimate binding site. Gly-248 contacts NADP(+).

Belongs to the shikimate dehydrogenase family. Homodimer.

It catalyses the reaction shikimate + NADP(+) = 3-dehydroshikimate + NADPH + H(+). Its pathway is metabolic intermediate biosynthesis; chorismate biosynthesis; chorismate from D-erythrose 4-phosphate and phosphoenolpyruvate: step 4/7. Functionally, involved in the biosynthesis of the chorismate, which leads to the biosynthesis of aromatic amino acids. Catalyzes the reversible NADPH linked reduction of 3-dehydroshikimate (DHSA) to yield shikimate (SA). This Rhizobium etli (strain CIAT 652) protein is Shikimate dehydrogenase (NADP(+)).